The sequence spans 308 residues: Aspartate carbamoyltransferase catalytic subunit (308 aa).

Carbamoyl phosphate-binding residues include Arg57 and Thr58. Lys86 provides a ligand contact to L-aspartate. Residues Arg107, His135, and Gln138 each coordinate carbamoyl phosphate. 2 residues coordinate L-aspartate: Arg168 and Arg229. Leu268 and Pro269 together coordinate carbamoyl phosphate.

Belongs to the aspartate/ornithine carbamoyltransferase superfamily. ATCase family. As to quaternary structure, heterooligomer of catalytic and regulatory chains.

It catalyses the reaction carbamoyl phosphate + L-aspartate = N-carbamoyl-L-aspartate + phosphate + H(+). The protein operates within pyrimidine metabolism; UMP biosynthesis via de novo pathway; (S)-dihydroorotate from bicarbonate: step 2/3. In terms of biological role, catalyzes the condensation of carbamoyl phosphate and aspartate to form carbamoyl aspartate and inorganic phosphate, the committed step in the de novo pyrimidine nucleotide biosynthesis pathway. The sequence is that of Aspartate carbamoyltransferase catalytic subunit from Pyrococcus abyssi (strain GE5 / Orsay).